A 320-amino-acid chain; its full sequence is HPr kinase/phosphorylase (320 aa).

Active-site residues include histidine 141 and lysine 162. 156–163 (GHSGLGKS) contributes to the ATP binding site. Residue serine 163 participates in Mg(2+) binding. The Proton acceptor; for phosphorylation activity. Proton donor; for dephosphorylation activity role is filled by aspartate 180. The interval 204–213 (LEVRGLGILN) is important for the catalytic mechanism of both phosphorylation and dephosphorylation. Glutamate 205 is a Mg(2+) binding site. Arginine 248 is an active-site residue. The tract at residues 269–274 (PVAVGR) is important for the catalytic mechanism of dephosphorylation.

Belongs to the HPrK/P family. As to quaternary structure, homohexamer. The cofactor is Mg(2+).

It carries out the reaction [HPr protein]-L-serine + ATP = [HPr protein]-O-phospho-L-serine + ADP + H(+). It catalyses the reaction [HPr protein]-O-phospho-L-serine + phosphate + H(+) = [HPr protein]-L-serine + diphosphate. Functionally, catalyzes the ATP- as well as the pyrophosphate-dependent phosphorylation of a specific serine residue in HPr, a phosphocarrier protein of the phosphoenolpyruvate-dependent sugar phosphotransferase system (PTS). HprK/P also catalyzes the pyrophosphate-producing, inorganic phosphate-dependent dephosphorylation (phosphorolysis) of seryl-phosphorylated HPr (P-Ser-HPr). In Neisseria meningitidis serogroup B (strain ATCC BAA-335 / MC58), this protein is HPr kinase/phosphorylase.